The chain runs to 760 residues: Catalase-peroxidase (760 aa).

Residues 1–45 form the signal peptide; that stretch reads MKGTPFRSPHLYQEGSSCMHRTIRSVAAVLTVVLSATIPMVPAWS. A cross-link (tryptophyl-tyrosyl-methioninium (Trp-Tyr) (with M-271)) is located at residues 124 to 245; that stretch reads WHGAGTYRTY…LAATQMGLIY (122 aa). The active-site Proton acceptor is H125. A cross-link (tryptophyl-tyrosyl-methioninium (Tyr-Met) (with W-124)) is located at residues 245–271; sequence YVNPEGPNGVPDPVAAARDIREAFGGM. Heme b is bound at residue H286.

The protein belongs to the peroxidase family. Peroxidase/catalase subfamily. In terms of assembly, homodimer or homotetramer. Heme b is required as a cofactor. In terms of processing, formation of the three residue Trp-Tyr-Met cross-link is important for the catalase, but not the peroxidase activity of the enzyme.

The catalysed reaction is H2O2 + AH2 = A + 2 H2O. The enzyme catalyses 2 H2O2 = O2 + 2 H2O. Its function is as follows. Bifunctional enzyme with both catalase and broad-spectrum peroxidase activity. This is Catalase-peroxidase from Granulibacter bethesdensis (strain ATCC BAA-1260 / CGDNIH1).